A 699-amino-acid polypeptide reads, in one-letter code: tRNA(Met) cytidine acetyltransferase TmcA (699 aa).

ATP-binding positions include Q179, 201 to 210 (GRGKSTLAGM), and R323. In terms of domain architecture, N-acetyltransferase spans 359-543 (IEIPLYEQRD…SGCYTAMALL (185 aa)). Acetyl-CoA contacts are provided by residues 471 to 473 (VAV), E511, and R518.

Belongs to the RNA cytidine acetyltransferase family. TmcA subfamily.

It localises to the cytoplasm. It catalyses the reaction cytidine(34) in elongator tRNA(Met) + acetyl-CoA + ATP + H2O = N(4)-acetylcytidine(34) in elongator tRNA(Met) + ADP + phosphate + CoA + H(+). Functionally, catalyzes the formation of N(4)-acetylcytidine (ac(4)C) at the wobble position of tRNA(Met), by using acetyl-CoA as an acetyl donor and ATP (or GTP). The chain is tRNA(Met) cytidine acetyltransferase TmcA from Yersinia pestis (strain D106004).